Consider the following 342-residue polypeptide: Ankyrin repeat domain-containing protein 2A (342 aa).

The disordered stretch occupies residues M1–G41. Residues S12–K26 show a composition bias toward basic and acidic residues. The segment covering P27–S37 has biased composition (low complexity). ANK repeat units lie at residues E217–E246, E250–A279, N283–L312, and D316–L342. 2 residues coordinate a 1,2-diacyl-3-O-(beta-D-galactosyl)-sn-glycerol: H223 and E246. A 1,2-diacyl-sn-glycero-3-phospho-(1'-sn-glycerol) is bound by residues Y294 and R296.

As to quaternary structure, interacts with TOM20-4, CYTB5-E, CBR1, APX3, APX5, TOC34 and GRF6. Binds to chloroplast outer envelope membrane (OEM) protein targeting signals, as well as to chloroplasts. Interacts with OEP7. Binds to HSP17.8 via its ankyrin repeats, this interaction enhances chaperone activity and chloroplast binding. Also interacts with HSP17.4A, HSP17.6A and HSP18.1. Binds specifically to two chloroplast glycolipids, monogalactosyldiacylglycerol (MGDG) and phosphatidylglycerol (PG). As to expression, ubiquitously expressed at basal level.

It is found in the cytoplasm. The protein localises to the nucleus. The protein resides in the plastid. Its subcellular location is the chloroplast outer membrane. Its function is as follows. Exhibits chaperone activity toward chloroplast outer envelope membrane, mitochondrion outer membrane, endoplasmic reticulum membrane and peroxisomal proteins, by recruiting specific proteins containing a single transmembrane associated with an AKR2A-binding sequence (ABS) and subsequently binding glycolipids (e.g. monogalactosyldiacylglycerol (MGDG) and phosphatidylglycerol (PG)) present in the membrane of the target organelle. Seems to be involved in the regulation of hydrogen peroxide levels during biotic and abiotic stresses by optimizing the ascorbate peroxidase 3 (APX3) hydrogen peroxide-degrading activity. This regulation might be monitored by GRF6. Cytosolic targeting factor for chloroplast outer membrane (COM) proteins that mediates sorting and targeting of nascent chloroplast outer envelope membrane (OEM) proteins to the chloroplast. Facilitates the targeting of OEP7 to chloroplasts. Facilitates the targeting of APX3 to peroxisomes. Involved in cellular metabolism (e.g. peroxisome activity) and required for plant growth and development. The protein is Ankyrin repeat domain-containing protein 2A of Arabidopsis thaliana (Mouse-ear cress).